The sequence spans 152 residues: Transcriptional regulator MraZ (152 aa).

SpoVT-AbrB domains are found at residues 5–52 (ASSL…PLAQ) and 81–124 (ATEY…DEAR).

The protein belongs to the MraZ family. In terms of assembly, forms oligomers.

It is found in the cytoplasm. Its subcellular location is the nucleoid. In Pseudoalteromonas translucida (strain TAC 125), this protein is Transcriptional regulator MraZ.